Here is a 238-residue protein sequence, read N- to C-terminus: Ribonuclease PH (238 aa).

Phosphate contacts are provided by residues arginine 86 and 124-126 (GTR).

The protein belongs to the RNase PH family. Homohexameric ring arranged as a trimer of dimers.

The catalysed reaction is tRNA(n+1) + phosphate = tRNA(n) + a ribonucleoside 5'-diphosphate. Phosphorolytic 3'-5' exoribonuclease that plays an important role in tRNA 3'-end maturation. Removes nucleotide residues following the 3'-CCA terminus of tRNAs; can also add nucleotides to the ends of RNA molecules by using nucleoside diphosphates as substrates, but this may not be physiologically important. Probably plays a role in initiation of 16S rRNA degradation (leading to ribosome degradation) during starvation. In Histophilus somni (strain 2336) (Haemophilus somnus), this protein is Ribonuclease PH.